A 407-amino-acid polypeptide reads, in one-letter code: uncharacterized protein (407 aa).

11 helical membrane passes run 13–30, 40–62, 67–89, 118–140, 147–169, 179–199, 253–271, 281–303, 334–356, 361–378, and 385–402; these read IVFTSFILYLLFFLSPFL, VTPLASIIGSGYLVSAPLLYYVL, ILGMAGIVILAYLIGGAIRYNII, LAFAYMISIAFYLRLLSSFVFSG, VYERLLTTGLLLFIGISGFIRRL, AVGLKLSIIFSFLTALLYYNY, WISGFIYVSFMFLITSVFV, TEIIFLASAVSLVLGYLLRFGPL, GYLITTLVGVALVWSANVFEIIA, AFAFYYLLQTIIAWLVSF, and QFLVFTLLIPVLIFIVLF.

The protein localises to the cell membrane. This is an uncharacterized protein from Aquifex aeolicus (strain VF5).